Consider the following 334-residue polypeptide: Probable quinone oxidoreductase (334 aa).

Belongs to the zinc-containing alcohol dehydrogenase family. Quinone oxidoreductase subfamily.

The catalysed reaction is 2 a quinone + NADPH + H(+) = 2 a 1,4-benzosemiquinone + NADP(+). In Saccharomyces cerevisiae (strain ATCC 204508 / S288c) (Baker's yeast), this protein is Probable quinone oxidoreductase (ZTA1).